A 914-amino-acid chain; its full sequence is Chitin synthase B (914 aa).

2 disordered regions span residues 1–67 (MAYQ…TSGY) and 112–140 (YARSETSSTEAWRQRQAPGGAGSGGGGGL). A compositionally biased stretch (gly residues) spans 130 to 140 (GGAGSGGGGGL). Transmembrane regions (helical) follow at residues 543-562 (WLNGSFAAGIYSLMHFGRMY), 586-606 (ILTWFSLASYWLTTSVIMDLV), 627-647 (IVNTIVKYAYLGFLLLQFILA), 662-682 (SFVVFGIIQLYVVVDALYLVV), 712-732 (AGIIIIALAATFGLYFVASFM), 843-863 (LVTFWIFSNALMAVCITSDGV), and 882-902 (ALLWSNAVVALFRFIGACWFL).

This sequence belongs to the chitin synthase family. Class III subfamily.

Its subcellular location is the cell membrane. The catalysed reaction is [(1-&gt;4)-N-acetyl-beta-D-glucosaminyl](n) + UDP-N-acetyl-alpha-D-glucosamine = [(1-&gt;4)-N-acetyl-beta-D-glucosaminyl](n+1) + UDP + H(+). Its function is as follows. Polymerizes chitin, a structural polymer of the cell wall and septum, by transferring the sugar moiety of UDP-GlcNAc to the non-reducing end of the growing chitin polymer. Plays an important role in septal growth or maintenance. Mediates colony spore formation. This chain is Chitin synthase B, found in Aspergillus niger (strain ATCC MYA-4892 / CBS 513.88 / FGSC A1513).